Reading from the N-terminus, the 638-residue chain is MLEQIRGPADLQHLSQSALSELAGEIRQFLIHKVAATGGHLGPNLGVVELTLALHRVFDSPHDPLIFDTGHQAYVHKMLTGRSHEFDSLRKKDGLSGYPSRSESEHDWVESSHASAALSYADGLAKAFELTGHRNRHVVAVVGDGALTGGMCWEALNNIAAARRPVVIVVNDNGRSYAPTIGGFADHLAALRLQPGYERVLEEGRKAVRGLPVIGEFCYQCMHSVKAGIKDALSPQVMFTDLGLKYVGPIDGHDEHAVESALRHARGFNAPVIVHVVTRKGMGYAPAENDEAEQMHACGVIDVATGRATKVAAPGWTSSFSEALIDYGAKRRDIVAITAAMPGPTGLSAFRDRFPDRFFDVGIAEQHAMTSAAGLAMGGLHPVVAIYSTFLNRAFDQLMMDVALHKLPVTLVLDRSGVTGPDGASHNGMWDLSVLGIVPGMRVAAPRDGARLREELGEALDVNDAPTAIRFPKGDVGEDIPAVRRHRGVDVLAEPADGLSDDVLLVAVGPFASMALTVAERLRKQGIGVTVVDPRWVLPVPEVLTEFAAAHKLVVTVEDNGLHGGIGSSVSAALRHAEVDVPCRDVGLPQQFFDHASRGEVLADVGVTDRNISRQITGWVAALGATPADADEVSERLD.

Thiamine diphosphate is bound by residues His71 and Ser112–Ala114. Asp144 lines the Mg(2+) pocket. Residues Gly145–Ala146, Asn173, Tyr284, and Glu365 contribute to the thiamine diphosphate site. A Mg(2+)-binding site is contributed by Asn173.

This sequence belongs to the transketolase family. DXPS subfamily. In terms of assembly, homodimer. Requires Mg(2+) as cofactor. It depends on thiamine diphosphate as a cofactor.

The enzyme catalyses D-glyceraldehyde 3-phosphate + pyruvate + H(+) = 1-deoxy-D-xylulose 5-phosphate + CO2. The protein operates within metabolic intermediate biosynthesis; 1-deoxy-D-xylulose 5-phosphate biosynthesis; 1-deoxy-D-xylulose 5-phosphate from D-glyceraldehyde 3-phosphate and pyruvate: step 1/1. Functionally, catalyzes the acyloin condensation reaction between C atoms 2 and 3 of pyruvate and glyceraldehyde 3-phosphate to yield 1-deoxy-D-xylulose-5-phosphate (DXP). This Mycobacterium sp. (strain KMS) protein is 1-deoxy-D-xylulose-5-phosphate synthase.